The primary structure comprises 155 residues: MINLIGTYECKVDAKGRLMVPSALKKQLAPMMQDGFVIKRAVFQNCLELYPMEEWNVLMKRMNGLNRFKKKNNDFIRRFTAGVKTVEVDTNGRLLIPKDLVGFAGIEKEIVLSSAINIVEIWDKDKYEQTLEDSSDDFADLAEEVMGNDDFDGVS.

2 SpoVT-AbrB domains span residues 7-54 (TYEC…PMEE) and 83-126 (VKTV…DKDK).

The protein belongs to the MraZ family. As to quaternary structure, forms oligomers.

Its subcellular location is the cytoplasm. It localises to the nucleoid. This is Transcriptional regulator MraZ from Christiangramia forsetii (strain DSM 17595 / CGMCC 1.15422 / KT0803) (Gramella forsetii).